Here is a 135-residue protein sequence, read N- to C-terminus: Crossover junction endodeoxyribonuclease Hje (135 aa).

Mg(2+)-binding residues include glutamate 10, aspartate 39, and glutamate 52.

Belongs to the Holliday junction resolvase Hjc family. Hje subfamily. In terms of assembly, homodimer. It depends on Mg(2+) as a cofactor.

The catalysed reaction is Endonucleolytic cleavage at a junction such as a reciprocal single-stranded crossover between two homologous DNA duplexes (Holliday junction).. A structure-specific endonuclease that resolves Holliday junction (HJ) intermediates during genetic recombination. Acts only on 4-way DNA junctions in a sequence non-specific manner; introduces paired nicks in opposing strands 2 bases 3' of the point of strand exchange only on continuous strands of 4-way junction DNA. Cleaves both mobile and immobile junctions. Plays a more direct role in DNA repair than Hjc. Overexpression of this protein decreases the growth rate, and leads to genomic instability, and global transcriptomic changes. The sequence is that of Crossover junction endodeoxyribonuclease Hje from Saccharolobus islandicus (strain REY15A) (Sulfolobus islandicus).